The following is a 400-amino-acid chain: Lipase member N (400 aa).

The first 19 residues, 1-19 (MPMMWLFLTTACLIPGTLS), serve as a signal peptide directing secretion. An AB hydrolase-1 domain is found at 81–381 (PVVYMQHALF…DWNHFDFVWG (301 aa)). The active-site Nucleophile is S175. C249 and C258 are joined by a disulfide. N274 carries N-linked (GlcNAc...) asparagine glycosylation. Residues D346 and H375 each act as charge relay system in the active site.

Belongs to the AB hydrolase superfamily. Lipase family. In terms of tissue distribution, highly expressed in the epidermis. Also detected in other tissues, although at much lower levels, including liver and kidney.

Its subcellular location is the secreted. The catalysed reaction is a sterol ester + H2O = a sterol + a fatty acid + H(+). It catalyses the reaction a triacylglycerol + H2O = a 1,2-diacylglycerol + a fatty acid + H(+). It carries out the reaction a triacylglycerol + H2O = a diacylglycerol + a fatty acid + H(+). The enzyme catalyses a cholesterol ester + H2O = cholesterol + a fatty acid + H(+). Its function is as follows. Plays a highly specific role in the last step of keratinocyte differentiation. Contains two distinct domains: the alpha/beta hydrolase fold and the abhydrolase-associated lipase region, also features the consensus sequence of the active site of a genuine lipase. May have an essential function in lipid metabolism of the most differentiated epidermal layers. This is Lipase member N (Lipn) from Mus musculus (Mouse).